Here is a 706-residue protein sequence, read N- to C-terminus: Complement C1r-B subcomponent (706 aa).

The N-terminal stretch at 1 to 16 (MWLFALLVTLFYGVEG) is a signal peptide. The region spanning 17 to 140 (SIYLPQKLYG…KGFLAYYQAV (124 aa)) is the CUB 1 domain. Positions 65, 73, and 118 each coordinate Ca(2+). Cysteine 70 and cysteine 88 are joined by a disulfide. The N-linked (GlcNAc...) asparagine glycan is linked to asparagine 124. Ca(2+) contacts are provided by aspartate 141, leucine 142, and glutamate 144. One can recognise an EGF-like; calcium-binding domain in the interval 141-189 (DLDECASQPNSVEEGLQPRCQHLCHNYVGGYFCSCHPGYELQKDGQSCQ). Intrachain disulfides connect cysteine 145-cysteine 164, cysteine 160-cysteine 173, cysteine 175-cysteine 188, and cysteine 192-cysteine 219. Residues asparagine 166, tyrosine 167, and glycine 170 each coordinate Ca(2+). Asparagine 166 is modified ((3R)-3-hydroxyasparagine). A CUB 2 domain is found at 192–304 (CSSELYTEPS…RGWKLHYTTE (113 aa)). Serine 205 is subject to Phosphoserine; by CK2. Asparagine 220 carries N-linked (GlcNAc...) asparagine glycosylation. Ca(2+) is bound by residues aspartate 242, aspartate 252, aspartate 289, and aspartate 293. A disulfide bridge connects residues cysteine 249 and cysteine 267. Sushi domains are found at residues 306–372 (IKCP…RCKI) and 373–448 (KNCG…RCLP). Intrachain disulfides connect cysteine 308/cysteine 357, cysteine 337/cysteine 370, cysteine 375/cysteine 428, cysteine 405/cysteine 446, and cysteine 450/cysteine 578. Residues 463 to 703 (IIGGQPARPG…YVDWIKKEMG (241 aa)) form the Peptidase S1 domain. Catalysis depends on charge relay system residues histidine 501 and aspartate 558. The N-linked (GlcNAc...) asparagine glycan is linked to asparagine 582. Disulfide bonds link cysteine 621–cysteine 640 and cysteine 651–cysteine 681. Residue serine 655 is the Charge relay system of the active site.

The protein belongs to the peptidase S1 family. Core component of the complement C1 complex, a calcium-dependent complex composed of 1 molecule of the C1Q subcomplex, 2 molecules of C1R and 2 molecules of C1S. The C1Q subcomplex is composed 18 subunits: 3 chains of C1QA, C1QB, and C1QC trimerize to form 6 collagen-like triple helices connected to six globular ligand-recognition modules. Within the C1 complex, C1R is a dimer of identical chains, each of which is activated by cleavage into two chains, heavy and light, connected by disulfide bonds. Cleaved and activated by autocatalytic processing to generate Complement C1r subcomponent heavy and light chains that are connected by disulfide bonds. Post-translationally, the iron and 2-oxoglutarate dependent 3-hydroxylation of aspartate and asparagine is (R) stereospecific within EGF domains.

The protein resides in the secreted. The protein localises to the cell surface. It carries out the reaction Selective cleavage of Lys(or Arg)-|-Ile bond in complement subcomponent C1s to form the active form of C1s (EC 3.4.21.42).. Activated by the C1Q subcomplex of the C1 complex following C1Q binding to immunoglobulins (IgG or IgM) complexed with antigens to form antigen-antibody complexes on the surface of pathogens. Immunoglobulin-binding promotes autoactivation of C1R, which results in the cleavage of the Arg-Ile bond in the catalytic domain. In terms of biological role, serine protease component of the complement C1 complex, a multiprotein complex that initiates the classical pathway of the complement system, a cascade of proteins that leads to phagocytosis and breakdown of pathogens and signaling that strengthens the adaptive immune system. C1R catalyzes the first enzymatic step in the classical complement pathway: it is activated by the C1Q subcomplex of the C1 complex, which associates with IgG or IgM immunoglobulins complexed with antigens to form antigen-antibody complexes on the surface of pathogens. Immunoglobulin-binding promotes the autocatalytic cleavage and activation of C1R. Activated C1R then cleaves and activates C1S, the second protease of the classical complement pathway. It is unclear if C1R activates C1S within single, strained C1 complexes or between neighboring C1 complexes on surfaces. The chain is Complement C1r-B subcomponent (C1rb) from Mus musculus (Mouse).